Reading from the N-terminus, the 180-residue chain is Probable Brix domain-containing ribosomal biogenesis protein (180 aa).

Positions 1 to 178 (MTTSRRPSPR…KPAEMVKRGR (178 aa)) constitute a Brix domain.

Functionally, probably involved in the biogenesis of the ribosome. The sequence is that of Probable Brix domain-containing ribosomal biogenesis protein from Aeropyrum pernix (strain ATCC 700893 / DSM 11879 / JCM 9820 / NBRC 100138 / K1).